The primary structure comprises 362 residues: Probable prephenate dehydrogenase NovF (362 aa).

The Prephenate/arogenate dehydrogenase domain occupies 2 to 283 (RTAVIIGTGM…GIDGSNRVPG (282 aa)).

This sequence belongs to the prephenate/arogenate dehydrogenase family.

The catalysed reaction is prephenate + NAD(+) = 3-(4-hydroxyphenyl)pyruvate + CO2 + NADH. Its pathway is antibiotic biosynthesis; novobiocin biosynthesis. In terms of biological role, probable prephenate dehydrogenase that produces 4-hydroxyphenylpyruvate (4HPP) in the novobiocin biosynthesis pathway. Novobiocin is an aminocoumarin family antibiotic that targets bacterial DNA gyrases. This Streptomyces niveus (Streptomyces spheroides) protein is Probable prephenate dehydrogenase NovF (novF).